A 224-amino-acid polypeptide reads, in one-letter code: Urease accessory protein UreF (224 aa).

This sequence belongs to the UreF family. In terms of assembly, ureD, UreF and UreG form a complex that acts as a GTP-hydrolysis-dependent molecular chaperone, activating the urease apoprotein by helping to assemble the nickel containing metallocenter of UreC. The UreE protein probably delivers the nickel.

It localises to the cytoplasm. Required for maturation of urease via the functional incorporation of the urease nickel metallocenter. This Enterobacter sp. (strain 638) protein is Urease accessory protein UreF.